An 84-amino-acid polypeptide reads, in one-letter code: Putative membrane protein insertion efficiency factor (84 aa).

Belongs to the UPF0161 family.

It is found in the cell inner membrane. Functionally, could be involved in insertion of integral membrane proteins into the membrane. The protein is Putative membrane protein insertion efficiency factor of Shewanella amazonensis (strain ATCC BAA-1098 / SB2B).